Reading from the N-terminus, the 85-residue chain is Splicing factor 3B subunit 5 (85 aa).

Belongs to the SF3B5 family. As to quaternary structure, component of the SF3B complex. SF3B complex associates with the splicing factor SF3A complex and a 12S RNA unit to form the U2 small nuclear ribonucleoproteins complex (U2 snRNP). Identified in the SAGA transcription regulatory histone acetylation (HAT) complex; the interaction is RNA-independent.

The protein resides in the nucleus. Its function is as follows. Involved in pre-mRNA splicing as component of spliceosome. As part of the spliceosome complex, plays a role in the regulation of spermatogonial differentiation. When associated with the SAGA transcription regulatory histone acetylation (HAT) complex, might be involved in the transcriptional activation of a subset of SAGA-regulated genes. The chain is Splicing factor 3B subunit 5 from Drosophila melanogaster (Fruit fly).